The sequence spans 84 residues: Small ribosomal subunit protein uS17 (84 aa).

It belongs to the universal ribosomal protein uS17 family. As to quaternary structure, part of the 30S ribosomal subunit.

In terms of biological role, one of the primary rRNA binding proteins, it binds specifically to the 5'-end of 16S ribosomal RNA. The sequence is that of Small ribosomal subunit protein uS17 from Clostridium novyi (strain NT).